Reading from the N-terminus, the 39-residue chain is Natriuretic peptide TNPc (39 aa).

C9 and C25 are oxidised to a cystine.

It belongs to the natriuretic peptide family. As to expression, expressed by the venom gland.

Its subcellular location is the secreted. Its function is as follows. Snake venom natriuretic peptide that exhibits vasoactive and hypotensive activity. Produces a near complete relaxation in pre-contracted aortae by activating the natriuretic peptide receptor 1 (NPR1). Stimulates cGMP production through the natriuretic peptide receptor 1 (NPR1) with high potencies for the rat NPR1 (EC(50)=100 nM), and very weak potencies over human NPR1 (28% activation at 10 uM). In vivo, reduces both systolic and diastolic blood pressure with no effect on heart rate, when intravenously injected in conscious rabbits. Also enhances the bradycardia due to cardiac afferent stimulation (Bezold-Jarisch reflex). In Oxyuranus microlepidotus (Inland taipan), this protein is Natriuretic peptide TNPc.